Reading from the N-terminus, the 62-residue chain is DNA-directed RNA polymerase subunit Rpo10 (62 aa).

Zn(2+)-binding residues include C6, C9, C43, and C44.

The protein belongs to the archaeal Rpo10/eukaryotic RPB10 RNA polymerase subunit family. In terms of assembly, part of the RNA polymerase complex. The cofactor is Zn(2+).

It localises to the cytoplasm. The enzyme catalyses RNA(n) + a ribonucleoside 5'-triphosphate = RNA(n+1) + diphosphate. In terms of biological role, DNA-dependent RNA polymerase (RNAP) catalyzes the transcription of DNA into RNA using the four ribonucleoside triphosphates as substrates. The polypeptide is DNA-directed RNA polymerase subunit Rpo10 (Methanococcoides burtonii (strain DSM 6242 / NBRC 107633 / OCM 468 / ACE-M)).